A 454-amino-acid chain; its full sequence is UDP-glycosyltransferase 79A2 (454 aa).

UDP-alpha-D-glucose is bound by residues Ser269, 330-331 (WV), 348-356 (HAGYGSVIE), and 370-373 (KVDQ).

The protein belongs to the UDP-glycosyltransferase family.

May glycosylate diterpenes or flavonols in leaves. The sequence is that of UDP-glycosyltransferase 79A2 from Stevia rebaudiana (Stevia).